Here is a 2267-residue protein sequence, read N- to C-terminus: Acetyl-CoA carboxylase 1 (2267 aa).

The Biotin carboxylation domain maps to P38–A544. The region spanning P190–V384 is the ATP-grasp domain. C216–L273 contributes to the ATP binding site. Residues E339, E353, and N355 each contribute to the Mg(2+) site. Mn(2+) is bound by residues E339, E353, and N355. R357 is a catalytic residue. The 75-residue stretch at L671 to D745 folds into the Biotinyl-binding domain. N6-biotinyllysine is present on K712. Residues P1502 to K1843 enclose the CoA carboxyltransferase N-terminal domain. The carboxyltransferase stretch occupies residues P1502–E2163. Residues R1752, K2053, and R2055 each contribute to the CoA site. The CoA carboxyltransferase C-terminal domain occupies P1847–E2163.

In terms of assembly, homodimer. Mg(2+) is required as a cofactor. Requires Mn(2+) as cofactor. Biotin serves as cofactor.

It is found in the cytoplasm. Its subcellular location is the cytosol. It carries out the reaction hydrogencarbonate + acetyl-CoA + ATP = malonyl-CoA + ADP + phosphate + H(+). The enzyme catalyses N(6)-biotinyl-L-lysyl-[protein] + hydrogencarbonate + ATP = N(6)-carboxybiotinyl-L-lysyl-[protein] + ADP + phosphate + H(+). It participates in lipid metabolism; malonyl-CoA biosynthesis; malonyl-CoA from acetyl-CoA: step 1/1. In terms of biological role, multifunctional enzyme that catalyzes the carboxylation of acetyl-CoA, forming malonyl-CoA, which is used in the plastid for fatty acid synthesis and in the cytosol in various biosynthetic pathways including fatty acid elongation. This is Acetyl-CoA carboxylase 1 (ACC1) from Oryza sativa subsp. japonica (Rice).